The primary structure comprises 252 residues: Ubiquinone/menaquinone biosynthesis C-methyltransferase UbiE (252 aa).

Residues threonine 71, aspartate 100, 124–125, and serine 141 each bind S-adenosyl-L-methionine; that span reads DA.

The protein belongs to the class I-like SAM-binding methyltransferase superfamily. MenG/UbiE family.

The enzyme catalyses a 2-demethylmenaquinol + S-adenosyl-L-methionine = a menaquinol + S-adenosyl-L-homocysteine + H(+). The catalysed reaction is a 2-methoxy-6-(all-trans-polyprenyl)benzene-1,4-diol + S-adenosyl-L-methionine = a 5-methoxy-2-methyl-3-(all-trans-polyprenyl)benzene-1,4-diol + S-adenosyl-L-homocysteine + H(+). It participates in quinol/quinone metabolism; menaquinone biosynthesis; menaquinol from 1,4-dihydroxy-2-naphthoate: step 2/2. It functions in the pathway cofactor biosynthesis; ubiquinone biosynthesis. In terms of biological role, methyltransferase required for the conversion of demethylmenaquinol (DMKH2) to menaquinol (MKH2) and the conversion of 2-polyprenyl-6-methoxy-1,4-benzoquinol (DDMQH2) to 2-polyprenyl-3-methyl-6-methoxy-1,4-benzoquinol (DMQH2). This is Ubiquinone/menaquinone biosynthesis C-methyltransferase UbiE from Caulobacter vibrioides (strain ATCC 19089 / CIP 103742 / CB 15) (Caulobacter crescentus).